Here is a 78-residue protein sequence, read N- to C-terminus: MTASILQQSVVDADFRAALLENPAAFGASAAALPTPVEAQDQASLDFWTKDIAATEAFACRQSCSFGPFTFVCDGNTK.

Positions Met-1–Ala-59 are excised as a propeptide. 2 consecutive cross-links (beta-methyllanthionine (Cys-Thr)) follow at residues Cys-60–Thr-77 and Cys-64–Thr-70. Positions Ser-63–Cys-73 form a cross-link, lanthionine (Ser-Cys). The lysinoalanine (Ser-Lys) cross-link spans Ser-65–Lys-78. A (3R)-3-hydroxyaspartate modification is found at Asp-74.

Belongs to the type B lantibiotic family. Post-translationally, maturation of lantibiotics involves the enzymatic conversion of Thr, and Ser into dehydrated AA and the formation of thioether bonds with cysteine or the formation of dialkylamine bonds with lysine. This is followed by membrane translocation and cleavage of the modified precursor.

Functionally, can act as inhibitor of the enzyme phospholipase A2, and of the angiotensin-converting enzyme. Shows inhibitory activities against herpes simplex virus and immunopotentiating activities. Its antimicrobial activities are not very pronounced. The polypeptide is Lantibiotic cinnamycin (cinA) (Streptomyces griseoverticillatus (Streptoverticillium griseoverticillatum)).